The chain runs to 130 residues: Small ribosomal subunit protein uS8 (130 aa).

Belongs to the universal ribosomal protein uS8 family. In terms of assembly, part of the 30S ribosomal subunit. Contacts proteins S5 and S12.

Its function is as follows. One of the primary rRNA binding proteins, it binds directly to 16S rRNA central domain where it helps coordinate assembly of the platform of the 30S subunit. The protein is Small ribosomal subunit protein uS8 of Cronobacter sakazakii (strain ATCC BAA-894) (Enterobacter sakazakii).